We begin with the raw amino-acid sequence, 106 residues long: ATP-dependent Clp protease adapter protein ClpS (106 aa).

It belongs to the ClpS family. In terms of assembly, binds to the N-terminal domain of the chaperone ClpA.

Functionally, involved in the modulation of the specificity of the ClpAP-mediated ATP-dependent protein degradation. In Aliivibrio fischeri (strain ATCC 700601 / ES114) (Vibrio fischeri), this protein is ATP-dependent Clp protease adapter protein ClpS.